Reading from the N-terminus, the 431-residue chain is Enolase (431 aa).

Residue Q167 participates in (2R)-2-phosphoglycerate binding. E209 acts as the Proton donor in catalysis. Positions 246, 290, and 316 each coordinate Mg(2+). (2R)-2-phosphoglycerate-binding residues include K341, R370, S371, and K392. K341 acts as the Proton acceptor in catalysis.

It belongs to the enolase family. As to quaternary structure, component of the RNA degradosome, a multiprotein complex involved in RNA processing and mRNA degradation. Requires Mg(2+) as cofactor.

The protein resides in the cytoplasm. It localises to the secreted. The protein localises to the cell surface. The enzyme catalyses (2R)-2-phosphoglycerate = phosphoenolpyruvate + H2O. The protein operates within carbohydrate degradation; glycolysis; pyruvate from D-glyceraldehyde 3-phosphate: step 4/5. Functionally, catalyzes the reversible conversion of 2-phosphoglycerate (2-PG) into phosphoenolpyruvate (PEP). It is essential for the degradation of carbohydrates via glycolysis. This is Enolase from Shigella flexneri serotype 5b (strain 8401).